A 199-amino-acid polypeptide reads, in one-letter code: Putative DNA-directed RNA polymerase subunit L376 (199 aa).

Belongs to the eukaryotic RPB7/RPC8 RNA polymerase subunit family.

It is found in the virion. The enzyme catalyses RNA(n) + a ribonucleoside 5'-triphosphate = RNA(n+1) + diphosphate. In Acanthamoeba polyphaga (Amoeba), this protein is Putative DNA-directed RNA polymerase subunit L376.